Reading from the N-terminus, the 166-residue chain is Small ribosomal subunit protein bS6 (166 aa).

The tract at residues 97–166 (EEGPSAMMRK…EEAETATDGE (70 aa)) is disordered. Positions 105–159 (RKADRDRERDDRGGGFRGEREGGFRGDREGGFRGGDRDGGGFRGDRGPRRPREEA) are enriched in basic and acidic residues.

The protein belongs to the bacterial ribosomal protein bS6 family.

In terms of biological role, binds together with bS18 to 16S ribosomal RNA. In Bradyrhizobium diazoefficiens (strain JCM 10833 / BCRC 13528 / IAM 13628 / NBRC 14792 / USDA 110), this protein is Small ribosomal subunit protein bS6.